Reading from the N-terminus, the 682-residue chain is Heat shock 70 kDa protein 9, mitochondrial (682 aa).

The transit peptide at 1 to 46 (MASVALLRSFRRREVQMASVSAFKSVSANGKNSMFGKLGYLARPFC) directs the protein to the mitochondrion. A disordered region spans residues 640–682 (SKIGEHMSKGSGSSGSDGSSGEGTSGTEQTPEAEFEEASGSRK). The span at 651 to 663 (GSSGSDGSSGEGT) shows a compositional bias: gly residues.

It belongs to the heat shock protein 70 (TC 1.A.33) family. DnaK subfamily. Interacts with HSCB.

It is found in the mitochondrion. It localises to the cytoplasm. The protein resides in the cytosol. Functionally, chaperone involved in the maturation of iron-sulfur [Fe-S] cluster-containing proteins. Has a low intrinsic ATPase activity which is markedly stimulated by HSCB and ISU1. In cooperation with other chaperones, Hsp70s are key components that facilitate folding of de novo synthesized proteins, assist translocation of precursor proteins into organelles, and are responsible for degradation of damaged protein under stress conditions. The polypeptide is Heat shock 70 kDa protein 9, mitochondrial (Arabidopsis thaliana (Mouse-ear cress)).